Consider the following 24-residue polypeptide: Caerulein precursor fragment BM1 (24 aa).

Expressed by the skin glands.

Its subcellular location is the secreted. In terms of biological role, antimicrobial peptide. The sequence is that of Caerulein precursor fragment BM1 from Xenopus boumbaensis (Mawa clawed frog).